We begin with the raw amino-acid sequence, 292 residues long: Bifunctional protein FolD (292 aa).

Residues 166 to 168, S191, and I232 each bind NADP(+); that span reads GRS.

Belongs to the tetrahydrofolate dehydrogenase/cyclohydrolase family. In terms of assembly, homodimer.

It carries out the reaction (6R)-5,10-methylene-5,6,7,8-tetrahydrofolate + NADP(+) = (6R)-5,10-methenyltetrahydrofolate + NADPH. The catalysed reaction is (6R)-5,10-methenyltetrahydrofolate + H2O = (6R)-10-formyltetrahydrofolate + H(+). Its pathway is one-carbon metabolism; tetrahydrofolate interconversion. Functionally, catalyzes the oxidation of 5,10-methylenetetrahydrofolate to 5,10-methenyltetrahydrofolate and then the hydrolysis of 5,10-methenyltetrahydrofolate to 10-formyltetrahydrofolate. The sequence is that of Bifunctional protein FolD from Wolbachia sp. subsp. Drosophila simulans (strain wRi).